Reading from the N-terminus, the 1139-residue chain is Sterol regulatory element-binding protein 2 (1139 aa).

The segment at 1-50 (MDESSELGGLETMDTLTELGDELTLGDIDEMLQFVSNQVGEFPDLFSEQL) is transcriptional activation (acidic). At 1–479 (MDESSELGGL…VALGMVDRSR (479 aa)) the chain is on the cytoplasmic side. Disordered regions lie at residues 48-104 (EQLC…SPST) and 119-143 (TPPRATPVLQPRPQPQPQPQPSAQL). Low complexity predominate over residues 61 to 77 (GSSSSSNSSSSSGSNSR). Polar residues predominate over residues 90 to 104 (RSFSQVPLPTFSPST). The span at 119 to 138 (TPPRATPVLQPRPQPQPQPQ) shows a compositional bias: pro residues. The interval 235-489 (QQVPVLVQPQ…ILLCVLTFLG (255 aa)) is interaction with LMNA. A bHLH domain is found at 328–378 (ERRTTHNIIEKRYRSSINDKIIELKDLVMGTDAKMHKSGVLRKAIDYIKYL). Residues 378–399 (LQQVNHKLRQENMVLKLANQKN) are leucine-zipper. Residue Lys-462 forms a Glycyl lysine isopeptide (Lys-Gly) (interchain with G-Cter in SUMO2) linkage. The helical transmembrane segment at 480 to 500 (ILLCVLTFLGLSFSPLTSLLQ) threads the bilayer. Over 501 to 531 (WGGAHDTDQHPYSGSGRSVLSLESGSGGWFD) the chain is Lumenal. The helical transmembrane segment at 532-552 (WMMPTLLLWLVNGVIVLSVFV) threads the bilayer. Topologically, residues 553-1139 (KLLVHGEPVI…LGGGTAIAAS (587 aa)) are cytoplasmic. Ser-1096 bears the Phosphoserine mark.

Belongs to the SREBP family. Homodimer; efficient DNA binding of the soluble transcription factor fragment requires dimerization with another bHLH protein. Interacts with LMNA. As to quaternary structure, forms a tight complex with SCAP, the SCAP-SREBP complex, in the endoplasmic reticulum membrane and the Golgi apparatus. Interacts with PAQR3; the interaction anchors the SCAP-SREBP complex to the Golgi apparatus in low cholesterol conditions. Interacts (via C-terminal domain) with RNF139. Processed in the Golgi apparatus, releasing the protein from the membrane. At low cholesterol the SCAP-SREBP complex is recruited into COPII vesicles for export from the endoplasmic reticulum. In the Golgi, complex SREBPs are cleaved sequentially by site-1 (MBTPS1, S1P) and site-2 (MBTPS2, S2P) proteases. The first cleavage by site-1 protease occurs within the luminal loop, the second cleavage by site-2 protease occurs within the first transmembrane domain, releasing the transcription factor from the Golgi membrane. Apoptosis triggers cleavage by the cysteine proteases caspase-3 and caspase-7. Cleavage and activation is induced by mediated cholesterol efflux. Post-translationally, phosphorylated by AMPK, leading to suppress protein processing and nuclear translocation, and repress target gene expression. In terms of processing, SCAP-free SREBF2 is ubiquitinated by the BCR(ARMC5) complex, leading to its degradation. Ubiquitinated; the nuclear form has a rapid turnover and is rapidly ubiquitinated and degraded by the proteasome in the nucleus.

The protein resides in the endoplasmic reticulum membrane. Its subcellular location is the golgi apparatus membrane. It is found in the cytoplasmic vesicle. It localises to the COPII-coated vesicle membrane. The protein localises to the nucleus. Activation by cleavage is down-regulated upon activation of SIRT3-dependent PRKAA1/AMPK-alpha signaling cascade which leads to inhibition of ATP-consuming lipogenesis to restore cellular energy balance. Functionally, precursor of the transcription factor form (Processed sterol regulatory element-binding protein 2), which is embedded in the endoplasmic reticulum membrane. Low sterol concentrations promote processing of this form, releasing the transcription factor form that translocates into the nucleus and activates transcription of genes involved in cholesterol biosynthesis. Key transcription factor that regulates expression of genes involved in cholesterol biosynthesis. Binds to the sterol regulatory element 1 (SRE-1) (5'-ATCACCCCAC-3'). Has dual sequence specificity binding to both an E-box motif (5'-ATCACGTGA-3') and to SRE-1 (5'-ATCACCCCAC-3'). Regulates transcription of genes related to cholesterol synthesis pathway. In Cricetulus griseus (Chinese hamster), this protein is Sterol regulatory element-binding protein 2 (SREBF2).